Consider the following 113-residue polypeptide: ATP-dependent Clp protease adapter protein ClpS (113 aa).

The protein belongs to the ClpS family. Binds to the N-terminal domain of the chaperone ClpA.

Its function is as follows. Involved in the modulation of the specificity of the ClpAP-mediated ATP-dependent protein degradation. The protein is ATP-dependent Clp protease adapter protein ClpS of Corynebacterium diphtheriae (strain ATCC 700971 / NCTC 13129 / Biotype gravis).